A 145-amino-acid polypeptide reads, in one-letter code: Phospholipase A2 (145 aa).

An N-terminal signal peptide occupies residues methionine 1–glycine 15. At glutamine 16 the chain carries Pyrrolidone carboxylic acid. Positions glutamine 16–arginine 22 are cleaved as a propeptide — removed by trypsin. 7 disulfide bridges follow: cysteine 33–cysteine 99, cysteine 49–cysteine 145, cysteine 51–cysteine 67, cysteine 66–cysteine 127, cysteine 73–cysteine 120, cysteine 83–cysteine 113, and cysteine 106–cysteine 118. Ca(2+) is bound by residues tyrosine 50, glycine 52, and glycine 54. The active site involves histidine 70. Aspartate 71 is a Ca(2+) binding site. The active site involves aspartate 121.

The protein belongs to the phospholipase A2 family. As to quaternary structure, monomer or homodimer. Requires Ca(2+) as cofactor. Activated by trypsin cleavage in the duodenum. Can also be activated by thrombin or autocatalytically.

The protein localises to the secreted. The catalysed reaction is a 1,2-diacyl-sn-glycero-3-phosphocholine + H2O = a 1-acyl-sn-glycero-3-phosphocholine + a fatty acid + H(+). The enzyme catalyses 1,2-ditetradecanoyl-sn-glycero-3-phosphocholine + H2O = 1-tetradecanoyl-sn-glycero-3-phosphocholine + tetradecanoate + H(+). It carries out the reaction 1,2-dihexadecanoyl-sn-glycero-3-phosphocholine + H2O = 1-hexadecanoyl-sn-glycero-3-phosphocholine + hexadecanoate + H(+). It catalyses the reaction 1-hexadecanoyl-2-(9Z-octadecenoyl)-sn-glycero-3-phosphocholine + H2O = 1-hexadecanoyl-sn-glycero-3-phosphocholine + (9Z)-octadecenoate + H(+). The catalysed reaction is 1-hexadecanoyl-2-(5Z,8Z,11Z,14Z-eicosatetraenoyl)-sn-glycero-3-phosphocholine + H2O = 1-hexadecanoyl-sn-glycero-3-phosphocholine + (5Z,8Z,11Z,14Z)-eicosatetraenoate + H(+). The enzyme catalyses 1-hexadecanoyl-2-(9Z-octadecenoyl)-sn-glycero-3-phospho-(1'-sn-glycerol) + H2O = 1-hexadecanoyl-sn-glycero-3-phospho-(1'-sn-glycerol) + (9Z)-octadecenoate + H(+). It carries out the reaction N-hexadecanoyl-1,2-di-(9Z-octadecenoyl)-sn-glycero-3-phosphoethanolamine + H2O = N-hexadecanoyl-1-(9Z-octadecenoyl)-sn-glycero-3-phosphoethanolamine + (9Z)-octadecenoate + H(+). It catalyses the reaction 1-hexadecanoyl-2-(9Z,12Z-octadecadienoyl)-sn-glycero-3-phosphoethanolamine + H2O = 1-hexadecanoyl-sn-glycero-3-phosphoethanolamine + (9Z,12Z)-octadecadienoate + H(+). The catalysed reaction is N,1-dihexadecanoyl-2-(9Z,12Z-octadecadienoyl)-sn-glycero-3-phosphoethanolamine + H2O = N,1-dihexadecanoyl-sn-glycero-3-phosphoethanolamine + (9Z,12Z)-octadecadienoate + H(+). Secretory calcium-dependent phospholipase A2 that primarily targets dietary phospholipids in the intestinal tract. Hydrolyzes the ester bond of the fatty acyl group attached at sn-2 position of phospholipids (phospholipase A2 activity) with preference for phosphatidylethanolamines and phosphatidylglycerols over phosphatidylcholines. May play a role in the biosynthesis of N-acyl ethanolamines that regulate energy metabolism and inflammation in the intestinal tract. Hydrolyzes N-acyl phosphatidylethanolamines to N-acyl lysophosphatidylethanolamines, which are further cleaved by a lysophospholipase D to release N-acyl ethanolamines. May act in an autocrine and paracrine manner. Has anti-helminth activity in a process regulated by gut microbiota. Upon helminth infection of intestinal epithelia, directly affects phosphatidylethanolamine contents in the membrane of helminth larvae, likely controlling an array of phospholipid-mediated cellular processes such as membrane fusion and cell division while providing for better immune recognition, ultimately reducing larvae integrity and infectivity. The polypeptide is Phospholipase A2 (PLA2G1B) (Bos taurus (Bovine)).